The chain runs to 131 residues: Large ribosomal subunit protein bL17 (131 aa).

The protein belongs to the bacterial ribosomal protein bL17 family. As to quaternary structure, part of the 50S ribosomal subunit. Contacts protein L32.

This is Large ribosomal subunit protein bL17 from Paraburkholderia phymatum (strain DSM 17167 / CIP 108236 / LMG 21445 / STM815) (Burkholderia phymatum).